A 668-amino-acid chain; its full sequence is DNA ligase (668 aa).

NAD(+) is bound by residues 37 to 41 (DNVYD), 86 to 87 (SM), and Glu-116. Lys-118 serves as the catalytic N6-AMP-lysine intermediate. 4 residues coordinate NAD(+): Arg-139, Glu-173, Lys-288, and Lys-312. Cys-406, Cys-409, Cys-424, and Cys-429 together coordinate Zn(2+). The region spanning 591 to 668 (APDNPFKDKT…TEEEAIAQIE (78 aa)) is the BRCT domain.

It belongs to the NAD-dependent DNA ligase family. LigA subfamily. It depends on Mg(2+) as a cofactor. The cofactor is Mn(2+).

It carries out the reaction NAD(+) + (deoxyribonucleotide)n-3'-hydroxyl + 5'-phospho-(deoxyribonucleotide)m = (deoxyribonucleotide)n+m + AMP + beta-nicotinamide D-nucleotide.. In terms of biological role, DNA ligase that catalyzes the formation of phosphodiester linkages between 5'-phosphoryl and 3'-hydroxyl groups in double-stranded DNA using NAD as a coenzyme and as the energy source for the reaction. It is essential for DNA replication and repair of damaged DNA. This Lactobacillus helveticus (strain DPC 4571) protein is DNA ligase.